The sequence spans 312 residues: Malate dehydrogenase (312 aa).

Residues Gly-7 to Gly-13 and Asp-34 contribute to the NAD(+) site. The substrate site is built by Arg-81 and Arg-87. NAD(+) contacts are provided by residues Asn-94 and Ile-117 to Asn-119. Residues Asn-119 and Arg-153 each coordinate substrate. His-177 functions as the Proton acceptor in the catalytic mechanism. Met-227 contributes to the NAD(+) binding site.

It belongs to the LDH/MDH superfamily. MDH type 1 family. In terms of assembly, homodimer.

The catalysed reaction is (S)-malate + NAD(+) = oxaloacetate + NADH + H(+). In terms of biological role, catalyzes the reversible oxidation of malate to oxaloacetate. The sequence is that of Malate dehydrogenase from Shigella dysenteriae serotype 1 (strain Sd197).